The sequence spans 254 residues: tRNA uridine(34) hydroxylase (254 aa).

The region spanning 123-217 is the Rhodanese domain; the sequence is QDPNVILLDT…YLESIPESES (95 aa). The Cysteine persulfide intermediate role is filled by Cys177.

This sequence belongs to the TrhO family.

The enzyme catalyses uridine(34) in tRNA + AH2 + O2 = 5-hydroxyuridine(34) in tRNA + A + H2O. Its function is as follows. Catalyzes oxygen-dependent 5-hydroxyuridine (ho5U) modification at position 34 in tRNAs. This Legionella pneumophila (strain Corby) protein is tRNA uridine(34) hydroxylase.